The chain runs to 203 residues: UPF0637 protein MCCL_0722 (203 aa).

This sequence belongs to the UPF0637 family.

This Macrococcus caseolyticus (strain JCSC5402) (Macrococcoides caseolyticum) protein is UPF0637 protein MCCL_0722.